We begin with the raw amino-acid sequence, 311 residues long: Cytosolic Fe-S cluster assembly factor Nubp1 homolog (311 aa).

The [4Fe-4S] cluster site is built by C9, C23, C26, and C32. 63-70 contacts ATP; the sequence is GKGGVGKS. C240 and C243 together coordinate [4Fe-4S] cluster.

The protein belongs to the Mrp/NBP35 ATP-binding proteins family. NUBP1/NBP35 subfamily. Heterotetramer of 2 Nubp1 and 2 Nubp2 chains. Requires [4Fe-4S] cluster as cofactor.

The protein resides in the cytoplasm. Functionally, component of the cytosolic iron-sulfur (Fe/S) protein assembly (CIA) machinery. Required for maturation of extramitochondrial Fe-S proteins. The Nubp1-Nubp2 heterotetramer forms a Fe-S scaffold complex, mediating the de novo assembly of an Fe-S cluster and its transfer to target apoproteins. The protein is Cytosolic Fe-S cluster assembly factor Nubp1 homolog of Drosophila pseudoobscura pseudoobscura (Fruit fly).